A 180-amino-acid chain; its full sequence is Oligoribonuclease (180 aa).

An Exonuclease domain is found at 7-170; it reads LIWIDLEMTG…DDIRESIAEL (164 aa). Y128 is an active-site residue.

The protein belongs to the oligoribonuclease family.

The protein localises to the cytoplasm. Its function is as follows. 3'-to-5' exoribonuclease specific for small oligoribonucleotides. This is Oligoribonuclease from Pseudomonas putida (strain ATCC 700007 / DSM 6899 / JCM 31910 / BCRC 17059 / LMG 24140 / F1).